Here is a 137-residue protein sequence, read N- to C-terminus: Large ribosomal subunit protein uL16 (137 aa).

Basic residues predominate over residues 1–17; it reads MLQPKRTKFRKQQKGRN. The segment at 1-21 is disordered; that stretch reads MLQPKRTKFRKQQKGRNRGQA.

Belongs to the universal ribosomal protein uL16 family. Part of the 50S ribosomal subunit.

In terms of biological role, binds 23S rRNA and is also seen to make contacts with the A and possibly P site tRNAs. This Nitrosococcus oceani (strain ATCC 19707 / BCRC 17464 / JCM 30415 / NCIMB 11848 / C-107) protein is Large ribosomal subunit protein uL16.